Consider the following 204-residue polypeptide: UPF0637 protein SAR1080 (204 aa).

The protein belongs to the UPF0637 family.

This Staphylococcus aureus (strain MRSA252) protein is UPF0637 protein SAR1080.